The sequence spans 338 residues: RNA 3'-terminal phosphate cyclase (338 aa).

Residues Gln103 and 283-287 (YLADQ) each bind ATP. His308 serves as the catalytic Tele-AMP-histidine intermediate.

This sequence belongs to the RNA 3'-terminal cyclase family. Type 1 subfamily.

The protein localises to the cytoplasm. It carries out the reaction a 3'-end 3'-phospho-ribonucleotide-RNA + ATP = a 3'-end 2',3'-cyclophospho-ribonucleotide-RNA + AMP + diphosphate. Functionally, catalyzes the conversion of 3'-phosphate to a 2',3'-cyclic phosphodiester at the end of RNA. The mechanism of action of the enzyme occurs in 3 steps: (A) adenylation of the enzyme by ATP; (B) transfer of adenylate to an RNA-N3'P to produce RNA-N3'PP5'A; (C) and attack of the adjacent 2'-hydroxyl on the 3'-phosphorus in the diester linkage to produce the cyclic end product. The biological role of this enzyme is unknown but it is likely to function in some aspects of cellular RNA processing. The polypeptide is RNA 3'-terminal phosphate cyclase (Shigella sonnei (strain Ss046)).